The sequence spans 772 residues: Ion-translocating oxidoreductase complex subunit C (772 aa).

2 consecutive 4Fe-4S ferredoxin-type domains span residues 369 to 397 (GEPQ…QQLY) and 407 to 436 (KATT…VQYF). Cys-377, Cys-380, Cys-383, Cys-387, Cys-416, Cys-419, Cys-422, and Cys-426 together coordinate [4Fe-4S] cluster. The interval 599–748 (KARKLEQQQA…EPEEQVDPRK (150 aa)) is disordered.

Belongs to the 4Fe4S bacterial-type ferredoxin family. RnfC subfamily. As to quaternary structure, the complex is composed of six subunits: RsxA, RsxB, RsxC, RsxD, RsxE and RsxG. It depends on [4Fe-4S] cluster as a cofactor.

The protein localises to the cell inner membrane. Part of a membrane-bound complex that couples electron transfer with translocation of ions across the membrane. Required to maintain the reduced state of SoxR. The protein is Ion-translocating oxidoreductase complex subunit C of Shigella dysenteriae serotype 1 (strain Sd197).